A 437-amino-acid chain; its full sequence is Sorting nexin-30 (437 aa).

Disordered stretches follow at residues 1-44 (MAGG…PDLL) and 54-73 (LILPNGGTPAGTSSPASSSS). Threonine 38 carries the phosphothreonine modification. Residue serine 40 is modified to Phosphoserine. The segment covering 63-73 (AGTSSPASSSS) has biased composition (low complexity). The PX domain maps to 89-210 (RDLFVIVDDP…IFLTAKDLNA (122 aa)). Residues arginine 132, glutamine 134, lysine 162, and arginine 176 each contribute to the a 1,2-diacyl-sn-glycero-3-phospho-(1D-myo-inositol-3-phosphate) site. Residues 234–437 (KLRTRPLEFA…PLLQEKQEAK (204 aa)) enclose the BAR domain.

Belongs to the sorting nexin family. Heterodimer; heterodimerizes with SNX4.

Its subcellular location is the early endosome membrane. In terms of biological role, involved in the regulation of endocytosis and in several stages of intracellular trafficking. Together with SNX4, involved in autophagosome assembly. The chain is Sorting nexin-30 from Homo sapiens (Human).